Reading from the N-terminus, the 469-residue chain is UDP-N-acetylmuramate--L-alanine ligase (469 aa).

113–119 (GTHGKTT) contributes to the ATP binding site.

Belongs to the MurCDEF family.

Its subcellular location is the cytoplasm. The catalysed reaction is UDP-N-acetyl-alpha-D-muramate + L-alanine + ATP = UDP-N-acetyl-alpha-D-muramoyl-L-alanine + ADP + phosphate + H(+). The protein operates within cell wall biogenesis; peptidoglycan biosynthesis. In terms of biological role, cell wall formation. The polypeptide is UDP-N-acetylmuramate--L-alanine ligase (Neisseria meningitidis serogroup C / serotype 2a (strain ATCC 700532 / DSM 15464 / FAM18)).